We begin with the raw amino-acid sequence, 172 residues long: Ribosome maturation factor RimM (172 aa).

The region spanning 96–168 (EGEFYYHQII…RVDVELMEGL (73 aa)) is the PRC barrel domain.

It belongs to the RimM family. In terms of assembly, binds ribosomal protein uS19.

Its subcellular location is the cytoplasm. Functionally, an accessory protein needed during the final step in the assembly of 30S ribosomal subunit, possibly for assembly of the head region. Essential for efficient processing of 16S rRNA. May be needed both before and after RbfA during the maturation of 16S rRNA. It has affinity for free ribosomal 30S subunits but not for 70S ribosomes. The polypeptide is Ribosome maturation factor RimM (Streptococcus pyogenes serotype M18 (strain MGAS8232)).